The chain runs to 1066 residues: Exportin-T (1066 aa).

The protein belongs to the exportin family.

The protein localises to the nucleus. Its subcellular location is the cytoplasm. In terms of biological role, tRNA nucleus export receptor which facilitates tRNA translocation across the nuclear pore complex. Involved in pre-tRNA splicing, probably by affecting the interaction of pre-tRNA with splicing endonuclease. The polypeptide is Exportin-T (LOS1) (Laccaria bicolor (strain S238N-H82 / ATCC MYA-4686) (Bicoloured deceiver)).